The chain runs to 374 residues: MKKKVLFIDRDGTLVIEPPVDYQLDSLEKLEFYPKVFRNLGFIRSKLDFEFVMVTNQDGLGTSSFPEETFWPAHNLMLKTLAGEGITFDDILIDRSMPEDCASTRKPRTGMLTKYISNPEYDLEGSFVIGDRPTDVELAKNIGCRAIYLQESIDLLKEKGLETYCALATTDWDRVAEFLFAGERRAEIRRTTKETDILVALNLDGKGTCDISTGLGFFDHMLEQIGKHSGMDLTIRVKGDLEVDEHHTIEDTAIALGECIYQALGSKRGIERYGYALPMDDCLCRVCLDFGGRPWLVWDAEFKREKIGEMPTEMFLHFFKSLSDAAKMNLNIKAEGQNEHHKIEGIFKALARALKMALKRDIYHFELPSSKGVL.

The interval 1–183 (MKKKVLFIDR…RVAEFLFAGE (183 aa)) is histidinol-phosphatase. The active-site Nucleophile is Asp-9. Asp-9, Asp-11, and Asp-131 together coordinate Mg(2+). Catalysis depends on Asp-11, which acts as the Proton donor. The segment at 184 to 374 (RRAEIRRTTK…FELPSSKGVL (191 aa)) is imidazoleglycerol-phosphate dehydratase.

In the N-terminal section; belongs to the histidinol-phosphatase family. It in the C-terminal section; belongs to the imidazoleglycerol-phosphate dehydratase family. Requires Mg(2+) as cofactor.

The protein localises to the cytoplasm. The enzyme catalyses D-erythro-1-(imidazol-4-yl)glycerol 3-phosphate = 3-(imidazol-4-yl)-2-oxopropyl phosphate + H2O. The catalysed reaction is L-histidinol phosphate + H2O = L-histidinol + phosphate. It functions in the pathway amino-acid biosynthesis; L-histidine biosynthesis; L-histidine from 5-phospho-alpha-D-ribose 1-diphosphate: step 6/9. Its pathway is amino-acid biosynthesis; L-histidine biosynthesis; L-histidine from 5-phospho-alpha-D-ribose 1-diphosphate: step 8/9. The sequence is that of Histidine biosynthesis bifunctional protein HisB from Bacteroides fragilis (strain ATCC 25285 / DSM 2151 / CCUG 4856 / JCM 11019 / LMG 10263 / NCTC 9343 / Onslow / VPI 2553 / EN-2).